Here is a 272-residue protein sequence, read N- to C-terminus: MIDRPLEGKVAFITGAARGLGRAHAVRLAADGANIIAVDICEQIASVPYPLSTADDLAATVELVEDAGGGIVARQGDVRDRASLSVALQAGLDEFGRLDIVVANAGIAMMQAGDDGWRDVIDVNLTGVFHTVQVAIPTLIEQGTGGSIVLISSAAGLVGIGSSDPGSLGYAAAKHGVVGLMRAYANHLAPQNIRVNSVHPCGVDTPMINNEFFQQWLTTADMDAPHNLGNALPVELVQPTDIANAVAWLASEEARYVTGVTLPVDAGFVNKR.

NAD(+) is bound by residues 12–34, 39–40, 77–78, and N104; these read FITG…DGAN, DI, and DV. Substrate is bound at residue S153. The active-site Proton acceptor is the Y170. NAD(+) is bound by residues K174 and 203–205; that span reads VDT.

The protein belongs to the short-chain dehydrogenases/reductases (SDR) family.

This is an uncharacterized protein from Mycobacterium tuberculosis (strain CDC 1551 / Oshkosh).